A 239-amino-acid chain; its full sequence is Lactate utilization protein A 1 (239 aa).

This sequence belongs to the LutA/YkgE family.

Functionally, is involved in L-lactate degradation and allows cells to grow with lactate as the sole carbon source. This chain is Lactate utilization protein A 1, found in Bacillus anthracis (strain A0248).